The chain runs to 295 residues: tRNA-cytidine(32) 2-sulfurtransferase (295 aa).

A PP-loop motif motif is present at residues 59 to 64 (SGGKDS). C134, C137, and C225 together coordinate [4Fe-4S] cluster.

The protein belongs to the TtcA family. As to quaternary structure, homodimer. Requires Mg(2+) as cofactor. [4Fe-4S] cluster is required as a cofactor.

Its subcellular location is the cytoplasm. It catalyses the reaction cytidine(32) in tRNA + S-sulfanyl-L-cysteinyl-[cysteine desulfurase] + AH2 + ATP = 2-thiocytidine(32) in tRNA + L-cysteinyl-[cysteine desulfurase] + A + AMP + diphosphate + H(+). Its pathway is tRNA modification. Its function is as follows. Catalyzes the ATP-dependent 2-thiolation of cytidine in position 32 of tRNA, to form 2-thiocytidine (s(2)C32). The sulfur atoms are provided by the cysteine/cysteine desulfurase (IscS) system. In Ruegeria sp. (strain TM1040) (Silicibacter sp.), this protein is tRNA-cytidine(32) 2-sulfurtransferase.